Reading from the N-terminus, the 303-residue chain is Dihydroorotate dehydrogenase B (NAD(+)), catalytic subunit (303 aa).

FMN-binding positions include Ser21 and Lys45–Gly46. Substrate-binding positions include Lys45 and Asn69–Leu73. 2 residues coordinate FMN: Asn99 and Asn127. Asn127 contacts substrate. Residue Cys130 is the Nucleophile of the active site. Residues Lys165 and Ile191 each coordinate FMN. Asn192–Thr193 provides a ligand contact to substrate. Residues Gly217, Gly243–Gly244, and Gly265–Thr266 each bind FMN.

Belongs to the dihydroorotate dehydrogenase family. Type 1 subfamily. As to quaternary structure, heterotetramer of 2 PyrK and 2 PyrD type B subunits. The cofactor is FMN.

It is found in the cytoplasm. It catalyses the reaction (S)-dihydroorotate + NAD(+) = orotate + NADH + H(+). It functions in the pathway pyrimidine metabolism; UMP biosynthesis via de novo pathway; orotate from (S)-dihydroorotate (NAD(+) route): step 1/1. Catalyzes the conversion of dihydroorotate to orotate with NAD(+) as electron acceptor. The protein is Dihydroorotate dehydrogenase B (NAD(+)), catalytic subunit (pyrD) of Bacteroides fragilis (strain ATCC 25285 / DSM 2151 / CCUG 4856 / JCM 11019 / LMG 10263 / NCTC 9343 / Onslow / VPI 2553 / EN-2).